Consider the following 640-residue polypeptide: VQVSIGKCNHNPSDQWLDNISRWSNDRMPIDSIGIDLGLQTTQPYSINDTFKIGSPIGGMIYLRFDTTFTNSFYVTFYNVGRASIINYNITMNEEWNSVLKNAPGNVAEIRTPGNRLVFTSRHIRNLEDAQYISDYWLKAISISNYAVTLENIPITLNFDQRVDAGAAVAFVDRWFTQHPSDWASGCVNKEGLINSGNWGPLHEMNHHMQGPYLRGGNWGIKEPGEETNNVMTSINYILYTNIAGHRNQGLSGWNYVSDGYSTIYKILNGENDQPHLRSYVNIAHAFGTDTLIALVKSYYGLWYENNYEGEYSIKRDSTSAFCLLAAIATKRDTRYLCSLFKYDIQQNVSEAIKNMNYPTYYPFFNVYAMSYNGNYYGRTYKIPYGTTRLNFTATTAIDPSATSVSYTIKSGLTKGKLEQVEENVYDYTPNFGADENDTFVLNIDCIVNGEKVHIEQDGTFELDPHQVEYEVYKDVKTKDMEQALNTIQNKTSNYTGTSTFFDIGNYDDGTMQSMLVEKGKLIVPTSGYYTLFMKADDLGRLLLNVNGEYEQLLNVKTYLGGYSKTINGTYATVKLEKDTEYPFILYNLNTGGQGFIRIGYCYQGTDQSSVNVSKCSVLDIGSSMILNEKVKAGAKEPEF.

The Peptidase M60 domain maps to 1–288 (VQVSIGKCNH…SYVNIAHAFG (288 aa)). A PA14 domain is found at 463-615 (LDPHQVEYEV…TDQSSVNVSK (153 aa)).

This is Antigenic protein NP1 from Entamoeba histolytica.